The primary structure comprises 456 residues: Putative alanyl-tRNA editing protein alaX (456 aa).

4 residues coordinate Zn(2+): histidine 125, histidine 129, cysteine 240, and histidine 244.

It belongs to the class-II aminoacyl-tRNA synthetase family. Alax-L subfamily. Zn(2+) is required as a cofactor.

Functionally, may function in trans to edit the amino acid moiety from incorrectly charged tRNA(Ala). The chain is Putative alanyl-tRNA editing protein alaX from Saccharomyces cerevisiae (strain ATCC 204508 / S288c) (Baker's yeast).